Consider the following 238-residue polypeptide: Ribosomal RNA small subunit methyltransferase I (238 aa).

It belongs to the methyltransferase superfamily. RsmI family.

It is found in the cytoplasm. It carries out the reaction cytidine(1402) in 16S rRNA + S-adenosyl-L-methionine = 2'-O-methylcytidine(1402) in 16S rRNA + S-adenosyl-L-homocysteine + H(+). In terms of biological role, catalyzes the 2'-O-methylation of the ribose of cytidine 1402 (C1402) in 16S rRNA. The sequence is that of Ribosomal RNA small subunit methyltransferase I from Mesomycoplasma conjunctivae (strain ATCC 25834 / NCTC 10147 / HRC/581) (Mycoplasma conjunctivae).